A 528-amino-acid polypeptide reads, in one-letter code: UDP-glucuronosyltransferase 2B19 (528 aa).

An N-terminal signal peptide occupies residues 1-21 (MSMKWTSALLLIQLSCYLSFG). Lys-135 is modified (N6-succinyllysine). The N-linked (GlcNAc...) asparagine glycan is linked to Asn-315. Residues 493–513 (VIGFLLACVATVIFIITKCLF) form a helical membrane-spanning segment.

It belongs to the UDP-glycosyltransferase family. In terms of tissue distribution, expressed in liver, ovary, prostate, colon, kidney, pancreas, brain, cerebellum, mammary gland and epididymis. Not expressed in small intestine, spleen, bladder, adrenal gland and testis.

It localises to the microsome membrane. The protein resides in the endoplasmic reticulum membrane. It catalyses the reaction glucuronate acceptor + UDP-alpha-D-glucuronate = acceptor beta-D-glucuronoside + UDP + H(+). UDPGT is of major importance in the conjugation and subsequent elimination of potentially toxic xenobiotics and endogenous compounds. This isozyme displays activity toward several classes of xenobiotic substrates: eugenol, 4-methyllumbelliferone, p-nitrophenol, 1-naphthol, p,p'-biphenol, naringenin and o,o'-biphenol. Active also on 3a-hydroxy and 17b-hydroxy positions of steroids. Functionally, contributes to the formation of androgen glucuronide in extrahepatic steroid target tissues such as the prostate. The chain is UDP-glucuronosyltransferase 2B19 (UGT2B19) from Macaca fascicularis (Crab-eating macaque).